The chain runs to 499 residues: Probable alpha-L-arabinofuranosidase B (499 aa).

A signal peptide spans 1–18; it reads MFSRRNLVALGLAATVSA. The catalytic stretch occupies residues 19-335; it reads GPCDIYEAGD…ENIVAAKYVS (317 aa). 3 cysteine pairs are disulfide-bonded: Cys21–Cys31, Cys81–Cys86, and Cys176–Cys177. Asn83 carries an N-linked (GlcNAc...) asparagine glycan. Asn202 carries an N-linked (GlcNAc...) asparagine glycan. Asp219 contacts substrate. The Nucleophile role is filled by Glu221. Residues Asn222, Asn223, and Gly296 each coordinate substrate. Asp297 (proton donor) is an active-site residue. Residues 336 to 499 are ABD; it reads GSLVSGPSFT…SFEIETAFAS (164 aa). Cys401 and Cys439 form a disulfide bridge. 8 residues coordinate substrate: His416, Asn418, Phe419, Asp435, His463, Asp465, Leu468, and Asp488.

Belongs to the glycosyl hydrolase 54 family.

It is found in the secreted. The catalysed reaction is Hydrolysis of terminal non-reducing alpha-L-arabinofuranoside residues in alpha-L-arabinosides.. It functions in the pathway glycan metabolism; L-arabinan degradation. In terms of biological role, alpha-L-arabinofuranosidase involved in the degradation of arabinoxylan, a major component of plant hemicellulose. Able to hydrolyze 1,5-, 1,3- and 1,2-alpha-linkages not only in L-arabinofuranosyl oligosaccharides, but also in polysaccharides containing terminal non-reducing L-arabinofuranoses in side chains, like L-arabinan, arabinogalactan and arabinoxylan. This is Probable alpha-L-arabinofuranosidase B (abfB) from Aspergillus niger (strain ATCC MYA-4892 / CBS 513.88 / FGSC A1513).